The sequence spans 332 residues: Anthranilate phosphoribosyltransferase (332 aa).

5-phospho-alpha-D-ribose 1-diphosphate contacts are provided by residues G79, 82-83 (GD), S87, 89-92 (NIST), 107-115 (KHGNRSVSS), and S119. G79 lines the anthranilate pocket. Position 91 (S91) interacts with Mg(2+). Residue N110 coordinates anthranilate. R165 is an anthranilate binding site. Mg(2+) is bound by residues D223 and E224.

This sequence belongs to the anthranilate phosphoribosyltransferase family. As to quaternary structure, homodimer. The cofactor is Mg(2+).

It catalyses the reaction N-(5-phospho-beta-D-ribosyl)anthranilate + diphosphate = 5-phospho-alpha-D-ribose 1-diphosphate + anthranilate. It participates in amino-acid biosynthesis; L-tryptophan biosynthesis; L-tryptophan from chorismate: step 2/5. Catalyzes the transfer of the phosphoribosyl group of 5-phosphorylribose-1-pyrophosphate (PRPP) to anthranilate to yield N-(5'-phosphoribosyl)-anthranilate (PRA). In Photorhabdus laumondii subsp. laumondii (strain DSM 15139 / CIP 105565 / TT01) (Photorhabdus luminescens subsp. laumondii), this protein is Anthranilate phosphoribosyltransferase.